Here is a 219-residue protein sequence, read N- to C-terminus: Adenylate kinase (219 aa).

13 to 18 (GAGKGT) is a binding site for ATP. Positions 33–62 (STGDIFRAAIKNETKMGLEAKKYIDAGNLV) are NMP. Residues Thr-34, Arg-39, 60 to 62 (NLV), 88 to 91 (GYPR), and Gln-95 contribute to the AMP site. An LID region spans residues 129–167 (GRFICRTCGATYHKLYNKPKVEGTCDVCGGHDFYQRDDD). An ATP-binding site is contributed by Arg-130. Residues Cys-133 and Cys-136 each coordinate Zn(2+). 139–140 (TY) contacts ATP. Positions 153 and 156 each coordinate Zn(2+). Positions 164 and 175 each coordinate AMP. Arg-203 lines the ATP pocket.

The protein belongs to the adenylate kinase family. As to quaternary structure, monomer.

It localises to the cytoplasm. It carries out the reaction AMP + ATP = 2 ADP. The protein operates within purine metabolism; AMP biosynthesis via salvage pathway; AMP from ADP: step 1/1. Functionally, catalyzes the reversible transfer of the terminal phosphate group between ATP and AMP. Plays an important role in cellular energy homeostasis and in adenine nucleotide metabolism. This is Adenylate kinase from Lactiplantibacillus plantarum (strain ATCC BAA-793 / NCIMB 8826 / WCFS1) (Lactobacillus plantarum).